A 349-amino-acid chain; its full sequence is Protein RecA (349 aa).

65–72 (GPESSGKT) contacts ATP. Residues 329-349 (KASDQTAAHDETEEEPDLLES) form a disordered region. A compositionally biased stretch (acidic residues) spans 339-349 (ETEEEPDLLES).

This sequence belongs to the RecA family.

The protein resides in the cytoplasm. In terms of biological role, can catalyze the hydrolysis of ATP in the presence of single-stranded DNA, the ATP-dependent uptake of single-stranded DNA by duplex DNA, and the ATP-dependent hybridization of homologous single-stranded DNAs. It interacts with LexA causing its activation and leading to its autocatalytic cleavage. This is Protein RecA from Acinetobacter baylyi (strain ATCC 33305 / BD413 / ADP1).